A 66-amino-acid polypeptide reads, in one-letter code: Putative alpha-neurotoxin RjAa44 (66 aa).

Positions 1–60 (KEGYPVDWGNCKYECMSDAYCKDLCADRKAKSGYCYKLNWSCYCEGLPDDSPIKTNGHCR) constitute an LCN-type CS-alpha/beta domain. Intrachain disulfides connect Cys11-Cys59, Cys15-Cys35, Cys21-Cys42, and Cys25-Cys44.

It belongs to the long (4 C-C) scorpion toxin superfamily. Sodium channel inhibitor family. Alpha subfamily. As to expression, expressed by the venom gland.

It localises to the secreted. Alpha toxins bind voltage-independently at site-3 of sodium channels (Nav) and inhibit the inactivation of the activated channels, thereby blocking neuronal transmission. This Rhopalurus junceus (Caribbean blue scorpion) protein is Putative alpha-neurotoxin RjAa44.